The primary structure comprises 471 residues: MSITNNMESPSDSEVRLTLNDRALWTKFCSLTNEMIVTKSGRRMFPVLKLTASGLEPNSMYSFLLDFAPADSNRWKYVNGEWVPGGKPEPHAASCVYVHPDSPNFGSHWMKQPVSFNKVKLTNKGNGGGQQIMLNSLHKYEPRIHVVKVGGEAASERTIATFSFPESQFIAVTAYQNEEVTSLKIKHNPFAKAFLDAKERPDQTDFHSLAGIPVSSPQVPSWYGRNGSTSSARHFTHCNSYGGESELTSVQDTAIPSYTSRNCMRNSYRGNARATPYTIPHKELTCQATSFPEPVPNDGFYPMFPNSELLPRTTLNNYSPAMGAYTNSSIVTSSDIQSGNNNNFFYSNNNNINTTDEVPTTYMTNDFNSFYNQSSNSGMPGTTYLPYQSSPVNQFYSYQPPYSTEIADISPTQQDIINAQNPYQTAWTPPLSYDGCSTMYNSITPYSSSGESTTSEMTLLATARYLQNLRL.

A DNA-binding region (T-box) is located at residues 24 to 196 (LWTKFCSLTN…HNPFAKAFLD (173 aa)).

Developing notochord.

It is found in the nucleus. In terms of biological role, involved in the transcriptional regulation of genes required for mesoderm differentiation. This Halocynthia roretzi (Sea squirt) protein is T-box transcription factor T.